A 1109-amino-acid polypeptide reads, in one-letter code: Carbamoyl phosphate synthase large chain (1109 aa).

The tract at residues 1–402 (MPKRTDLKSV…ALQKALRSLE (402 aa)) is carboxyphosphate synthetic domain. Residues Arg-129, Arg-169, Gly-175, Gly-176, Glu-208, Ile-210, Glu-215, Gly-241, Val-242, His-243, Gln-285, and Glu-299 each coordinate ATP. Residues 133–328 (KGVVERCGAE…IAKIATKLSL (196 aa)) enclose the ATP-grasp 1 domain. Mg(2+) contacts are provided by Gln-285, Glu-299, and Asn-301. Gln-285, Glu-299, and Asn-301 together coordinate Mn(2+). Positions 403–546 (QKGSQLDFSS…YHYSAYDEED (144 aa)) are oligomerization domain. The tract at residues 547–950 (EVALHSKPSI…AFAKSQAGAN (404 aa)) is carbamoyl phosphate synthetic domain. The 192-residue stretch at 677 to 868 (SRVLDKAGLV…MAKAAALIGT (192 aa)) folds into the ATP-grasp 2 domain. 10 residues coordinate ATP: Arg-713, Arg-752, Leu-754, Glu-759, Gly-784, Ile-785, His-786, Ser-787, Gln-827, and Glu-839. Gln-827, Glu-839, and Asn-841 together coordinate Mg(2+). Mn(2+)-binding residues include Gln-827, Glu-839, and Asn-841. In terms of domain architecture, MGS-like spans 951-1096 (NALPTEGKVF…QEHAAALGES (146 aa)). An allosteric domain region spans residues 951-1109 (NALPTEGKVF…AAAKADLQHA (159 aa)).

It belongs to the CarB family. Composed of two chains; the small (or glutamine) chain promotes the hydrolysis of glutamine to ammonia, which is used by the large (or ammonia) chain to synthesize carbamoyl phosphate. Tetramer of heterodimers (alpha,beta)4. Mg(2+) serves as cofactor. Requires Mn(2+) as cofactor.

It carries out the reaction hydrogencarbonate + L-glutamine + 2 ATP + H2O = carbamoyl phosphate + L-glutamate + 2 ADP + phosphate + 2 H(+). The catalysed reaction is hydrogencarbonate + NH4(+) + 2 ATP = carbamoyl phosphate + 2 ADP + phosphate + 2 H(+). It functions in the pathway amino-acid biosynthesis; L-arginine biosynthesis; carbamoyl phosphate from bicarbonate: step 1/1. It participates in pyrimidine metabolism; UMP biosynthesis via de novo pathway; (S)-dihydroorotate from bicarbonate: step 1/3. Functionally, large subunit of the glutamine-dependent carbamoyl phosphate synthetase (CPSase). CPSase catalyzes the formation of carbamoyl phosphate from the ammonia moiety of glutamine, carbonate, and phosphate donated by ATP, constituting the first step of 2 biosynthetic pathways, one leading to arginine and/or urea and the other to pyrimidine nucleotides. The large subunit (synthetase) binds the substrates ammonia (free or transferred from glutamine from the small subunit), hydrogencarbonate and ATP and carries out an ATP-coupled ligase reaction, activating hydrogencarbonate by forming carboxy phosphate which reacts with ammonia to form carbamoyl phosphate. The polypeptide is Carbamoyl phosphate synthase large chain (Pseudarthrobacter chlorophenolicus (strain ATCC 700700 / DSM 12829 / CIP 107037 / JCM 12360 / KCTC 9906 / NCIMB 13794 / A6) (Arthrobacter chlorophenolicus)).